Consider the following 213-residue polypeptide: Ribonuclease T (213 aa).

Residues 28–202 (VVVDVETGGF…YDTEQTARLF (175 aa)) form the Exonuclease domain. Aspartate 31, glutamate 33, histidine 189, and aspartate 194 together coordinate Mg(2+). The active-site Proton donor/acceptor is the histidine 189.

This sequence belongs to the RNase T family. In terms of assembly, homodimer. It depends on Mg(2+) as a cofactor.

Trims short 3' overhangs of a variety of RNA species, leaving a one or two nucleotide 3' overhang. Responsible for the end-turnover of tRNA: specifically removes the terminal AMP residue from uncharged tRNA (tRNA-C-C-A). Also appears to be involved in tRNA biosynthesis. In Xanthomonas axonopodis pv. citri (strain 306), this protein is Ribonuclease T.